The chain runs to 699 residues: Polyribonucleotide nucleotidyltransferase (699 aa).

Asp488 and Asp494 together coordinate Mg(2+). In terms of domain architecture, KH spans 555 to 614; the sequence is PRIYSIKVNPDKIKDVIGKGGSVIRSLTEETNTIIDIEDNGIIKIVALDYDKAKQAIRRI. In terms of domain architecture, S1 motif spans 624-692; the sequence is GAVYTGKVSH…RQGRIRLSMK (69 aa).

It belongs to the polyribonucleotide nucleotidyltransferase family. In terms of assembly, component of the RNA degradosome, which is a multiprotein complex involved in RNA processing and mRNA degradation. It depends on Mg(2+) as a cofactor.

It localises to the cytoplasm. It carries out the reaction RNA(n+1) + phosphate = RNA(n) + a ribonucleoside 5'-diphosphate. Its function is as follows. Involved in mRNA degradation. Catalyzes the phosphorolysis of single-stranded polyribonucleotides processively in the 3'- to 5'-direction. This chain is Polyribonucleotide nucleotidyltransferase, found in Blochmanniella pennsylvanica (strain BPEN).